Consider the following 65-residue polypeptide: Large ribosomal subunit protein bL35 (65 aa).

It belongs to the bacterial ribosomal protein bL35 family.

This is Large ribosomal subunit protein bL35 from Heliobacterium modesticaldum (strain ATCC 51547 / Ice1).